A 341-amino-acid polypeptide reads, in one-letter code: Mitochondrial protein C2orf69 homolog (341 aa).

A mitochondrion-targeting transit peptide spans 1 to 35 (MLQVVQSPHNLVFMGSIRSVVACLSLAAVARKMTA).

The protein belongs to the C2orf69 family.

It is found in the mitochondrion matrix. May play a role in the respiratory chain. The protein is Mitochondrial protein C2orf69 homolog of Danio rerio (Zebrafish).